A 134-amino-acid polypeptide reads, in one-letter code: Natriuretic peptides B (134 aa).

The N-terminal stretch at Met-1–Ser-26 is a signal peptide. Residue Ser-41 is glycosylated (O-linked (Xyl...) (chondroitin sulfate) serine). Thr-62 carries O-linked (HexNAc...) threonine; Partial glycosylation. O-linked (HexNAc...) serine glycans are attached at residues Ser-63 and Ser-70. A glycan (O-linked (HexNAc...) threonine) is linked at Thr-74. Ser-79 carries O-linked (HexNAc...) serine glycosylation. O-linked (HexNAc...) threonine; Partial glycosylation is present at Thr-84. O-linked (HexNAc...) threonine glycosylation is present at Thr-97. Cys-112 and Cys-128 are oxidised to a cystine.

This sequence belongs to the natriuretic peptide family. The precursor molecule is proteolytically cleaved by the endoproteases FURIN or CORIN at Arg-102 to produce brain natriuretic peptide 32 and NT-proBNP. This likely occurs after it has been secreted into the blood, either during circulation or in the target cells. CORIN also cleaves the precursor molecule at additional residues including Arg-99 and possibly Lys-105. In patients with heart failure, processing and degradation of natriuretic peptides B occurs but is delayed, possibly due to a decrease in enzyme level or activity of CORIN and DPP4. Post-translationally, undergoes further proteolytic cleavage by various proteases such as DPP4, MME and possibly FAP, to give rise to a variety of shorter peptides. Cleaved at Pro-104 by the prolyl endopeptidase FAP (seprase) activity (in vitro). Degraded by IDE. During IDE degradation, the resulting products initially increase the activation of NPR1 and can also stimulate NPR2 to produce cGMP before the fragments are completely degraded and inactivated by IDE (in vitro). In terms of processing, O-glycosylated on at least seven residues. In cardiomyocytes, glycosylation at Thr-97 is essential for the stability and processing of the extracellular natriuretic peptides B. Glycosylation, especially at Thr-97, may also be important for brain natriuretic peptide 32 stability and/or extracellular distribution. Glycosylation at Thr-97 appears to inhibit FURIN- or CORIN-mediated proteolytic processing, at least in HEK293 cells. In terms of tissue distribution, detected in the cardiac atria (at protein level). Detected in the kidney distal tubular cells (at protein level).

The protein resides in the secreted. Its function is as follows. Cardiac hormone that plays a key role in mediating cardio-renal homeostasis. May also function as a paracrine antifibrotic factor in the heart. Acts by specifically binding and stimulating NPR1 to produce cGMP, which in turn activates effector proteins that drive various biological responses. Involved in regulating the extracellular fluid volume and maintaining the fluid-electrolyte balance through natriuresis, diuresis, vasorelaxation, and inhibition of renin and aldosterone secretion. Binds the clearance receptor NPR3. May affect cardio-renal homeostasis. Able to promote the production of cGMP although its potency is very low compared to brain natriuretic peptide 32. Functionally, may have a role in cardio-renal homeostasis. Able to promote the production of cGMP. The protein is Natriuretic peptides B (NPPB) of Homo sapiens (Human).